The following is a 184-amino-acid chain: Small ribosomal subunit protein uS7 (184 aa).

Belongs to the universal ribosomal protein uS7 family. Part of the 30S ribosomal subunit.

Its function is as follows. One of the primary rRNA binding proteins, it binds directly to 16S rRNA where it nucleates assembly of the head domain of the 30S subunit. Is located at the subunit interface close to the decoding center. The sequence is that of Small ribosomal subunit protein uS7 from Thermoplasma volcanium (strain ATCC 51530 / DSM 4299 / JCM 9571 / NBRC 15438 / GSS1).